The sequence spans 267 residues: Acyl-[acyl-carrier-protein]--UDP-N-acetylglucosamine O-acyltransferase (267 aa).

The protein belongs to the transferase hexapeptide repeat family. LpxA subfamily. As to quaternary structure, homotrimer.

The protein localises to the cytoplasm. It carries out the reaction a (3R)-hydroxyacyl-[ACP] + UDP-N-acetyl-alpha-D-glucosamine = a UDP-3-O-[(3R)-3-hydroxyacyl]-N-acetyl-alpha-D-glucosamine + holo-[ACP]. The protein operates within glycolipid biosynthesis; lipid IV(A) biosynthesis; lipid IV(A) from (3R)-3-hydroxytetradecanoyl-[acyl-carrier-protein] and UDP-N-acetyl-alpha-D-glucosamine: step 1/6. In terms of biological role, involved in the biosynthesis of lipid A, a phosphorylated glycolipid that anchors the lipopolysaccharide to the outer membrane of the cell. The polypeptide is Acyl-[acyl-carrier-protein]--UDP-N-acetylglucosamine O-acyltransferase (Cupriavidus pinatubonensis (strain JMP 134 / LMG 1197) (Cupriavidus necator (strain JMP 134))).